A 207-amino-acid polypeptide reads, in one-letter code: Holliday junction resolvase RecU (207 aa).

The interval 1-30 is disordered; the sequence is MPIRYPNGQPYSRSPKQGQAKKPLPADTYS. Residues T87, D89, E102, and Q121 each contribute to the Mg(2+) site.

It belongs to the RecU family. Mg(2+) serves as cofactor.

It localises to the cytoplasm. It carries out the reaction Endonucleolytic cleavage at a junction such as a reciprocal single-stranded crossover between two homologous DNA duplexes (Holliday junction).. In terms of biological role, endonuclease that resolves Holliday junction intermediates in genetic recombination. Cleaves mobile four-strand junctions by introducing symmetrical nicks in paired strands. Promotes annealing of linear ssDNA with homologous dsDNA. Required for DNA repair, homologous recombination and chromosome segregation. This is Holliday junction resolvase RecU from Shouchella clausii (strain KSM-K16) (Alkalihalobacillus clausii).